The chain runs to 469 residues: Alpha-2C adrenergic receptor (469 aa).

The interval 1–29 (MDLQLTTNSTDSGDRGGSSNESLQRQPPS) is disordered. Topologically, residues 1 to 36 (MDLQLTTNSTDSGDRGGSSNESLQRQPPSQYSPAEV) are extracellular. 2 N-linked (GlcNAc...) asparagine glycosylation sites follow: N8 and N20. A helical membrane pass occupies residues 37-62 (AGLAAVVSFLIVFTIVGNVLVVIAVL). Residues 63-73 (TSRALKAPQNL) lie on the Cytoplasmic side of the membrane. Residues 74 to 99 (FQVSLASADILVATLVMPFSLANELM) form a helical membrane-spanning segment. At 100 to 109 (NYWYFGKVWC) the chain is on the extracellular side. C109 and C187 are oxidised to a cystine. A helical membrane pass occupies residues 110 to 132 (VIYLALDVLFCTSSIVHLCAISL). At 133–154 (DRYWSVTQAVEYNLKRTPRRIK) the chain is on the cytoplasmic side. A helical transmembrane segment spans residues 155 to 175 (GIIVTVWLISAVISFPPLISL). Residues 176–194 (YRDPEDDLYPQCELNDETW) lie on the Extracellular side of the membrane. The chain crosses the membrane as a helical span at residues 195 to 216 (YILSSCIGSFFAPCIIMVLVYV). The Cytoplasmic portion of the chain corresponds to 217–386 (RIYRVAKLRT…RKVTQAREKR (170 aa)). 2 disordered regions span residues 232–261 (KRTV…AAAA) and 279–353 (HHHH…SRLS). Over residues 279–296 (HHHHHLHHHHHHHHHQLR) the composition is skewed to basic residues. Residues 301 to 310 (LEDIELEESS) are compositionally biased toward acidic residues. Low complexity predominate over residues 331–353 (RGFSFSFSSTKGGQSAGAGSRLS). The chain crosses the membrane as a helical span at residues 387 to 407 (FTFVLAVVMGVFVVCWFPFFF). At 408–427 (TYSLYGICREACQVPETLFK) the chain is on the extracellular side. A helical transmembrane segment spans residues 428–448 (FFFWIGYCNSSLNPVIYTIFN). Residues 449 to 469 (QDFRRSFKHILFKKKKKTSLQ) lie on the Cytoplasmic side of the membrane.

Belongs to the G-protein coupled receptor 1 family. Adrenergic receptor subfamily. ADRA2C sub-subfamily.

It is found in the cell membrane. In terms of biological role, alpha-2 adrenergic receptors mediate the catecholamine-induced inhibition of adenylate cyclase through the action of G proteins. In Didelphis virginiana (North American opossum), this protein is Alpha-2C adrenergic receptor (ADRA2C).